The primary structure comprises 384 residues: Chorismate synthase (384 aa).

Residues R40 and R46 each contribute to the NADP(+) site. FMN-binding positions include 127–129 (RTS), 247–248 (QA), A292, 307–311 (KPIPT), and R333.

Belongs to the chorismate synthase family. In terms of assembly, homotetramer. The cofactor is FMNH2.

The catalysed reaction is 5-O-(1-carboxyvinyl)-3-phosphoshikimate = chorismate + phosphate. It participates in metabolic intermediate biosynthesis; chorismate biosynthesis; chorismate from D-erythrose 4-phosphate and phosphoenolpyruvate: step 7/7. In terms of biological role, catalyzes the anti-1,4-elimination of the C-3 phosphate and the C-6 proR hydrogen from 5-enolpyruvylshikimate-3-phosphate (EPSP) to yield chorismate, which is the branch point compound that serves as the starting substrate for the three terminal pathways of aromatic amino acid biosynthesis. This reaction introduces a second double bond into the aromatic ring system. The sequence is that of Chorismate synthase from Alkaliphilus oremlandii (strain OhILAs) (Clostridium oremlandii (strain OhILAs)).